The chain runs to 285 residues: Inositol monophosphatase 1 (285 aa).

The Mg(2+) site is built by glutamate 73, aspartate 93, isoleucine 95, and aspartate 96. Glutamate 73 contacts substrate. Substrate-binding positions include 95 to 98 (IDGT), 198 to 200 (GTA), glutamate 217, and aspartate 224. Aspartate 224 serves as a coordination point for Mg(2+).

Belongs to the inositol monophosphatase superfamily. Homodimer. Mg(2+) serves as cofactor.

It localises to the cytoplasm. It carries out the reaction a myo-inositol phosphate + H2O = myo-inositol + phosphate. The catalysed reaction is 1D-myo-inositol 1-phosphate + H2O = myo-inositol + phosphate. The enzyme catalyses 1D-myo-inositol 2-phosphate + H2O = myo-inositol + phosphate. It catalyses the reaction 1D-myo-inositol 3-phosphate + H2O = myo-inositol + phosphate. It carries out the reaction 1D-myo-inositol 4-phosphate + H2O = myo-inositol + phosphate. The catalysed reaction is 1D-myo-inositol 5-phosphate + H2O = myo-inositol + phosphate. The enzyme catalyses 1D-myo-inositol 6-phosphate + H2O = myo-inositol + phosphate. It catalyses the reaction scyllo-inositol 1-phosphate + H2O = scyllo-inositol + phosphate. It carries out the reaction alpha-D-galactose 1-phosphate + H2O = D-galactose + phosphate. The catalysed reaction is alpha-D-glucose 1-phosphate + H2O = D-glucose + phosphate. The enzyme catalyses D-glucose 6-phosphate + H2O = D-glucose + phosphate. It catalyses the reaction beta-D-fructose 1-phosphate + H2O = D-fructose + phosphate. It carries out the reaction glycerol 2-phosphate + H2O = glycerol + phosphate. The catalysed reaction is adenosine 2'-phosphate + H2O = adenosine + phosphate. Its pathway is polyol metabolism; myo-inositol biosynthesis; myo-inositol from D-glucose 6-phosphate: step 2/2. Inhibited by Li(+), Ca(2+) and Mn(2+), but also by Mg(2+) at concentrations above 3 mM. Phosphatase involved in the dephosphorylation of myo-inositol monophosphate to generate myo-inositol. Is also able to dephosphorylate scyllo-inositol-phosphate, myo-inositol 1,4-diphosphate, scyllo-inositol-1,3-diphosphate and scyllo-inositol-1,4-diphosphate. Also dephosphorylates in vitro other sugar-phosphates including D-galactose-1-phosphate, glucose-1-phosphate, glucose-6-phosphate, fructose-1-phosphate, beta-glycerophosphate and 2'-AMP. Responsible for the provision of inositol required for synthesis of phosphatidylinositol and polyphosphoinositides, and involved in maintaining normal brain function. Has been implicated as the pharmacological target for lithium Li(+) action in brain. This Xenopus laevis (African clawed frog) protein is Inositol monophosphatase 1 (impa1).